The chain runs to 391 residues: NADH-quinone oxidoreductase subunit D (391 aa).

This sequence belongs to the complex I 49 kDa subunit family. As to quaternary structure, NDH-1 is composed of 14 different subunits. Subunits NuoB, C, D, E, F, and G constitute the peripheral sector of the complex.

The protein resides in the cell inner membrane. The catalysed reaction is a quinone + NADH + 5 H(+)(in) = a quinol + NAD(+) + 4 H(+)(out). In terms of biological role, NDH-1 shuttles electrons from NADH, via FMN and iron-sulfur (Fe-S) centers, to quinones in the respiratory chain. The immediate electron acceptor for the enzyme in this species is believed to be ubiquinone. Couples the redox reaction to proton translocation (for every two electrons transferred, four hydrogen ions are translocated across the cytoplasmic membrane), and thus conserves the redox energy in a proton gradient. The chain is NADH-quinone oxidoreductase subunit D from Rickettsia canadensis (strain McKiel).